The sequence spans 325 residues: Beta-ketoacyl-[acyl-carrier-protein] synthase III (325 aa).

Residues Cys116 and His252 contribute to the active site. An ACP-binding region spans residues 253 to 257 (QANLR). Residue Asn282 is part of the active site.

Belongs to the thiolase-like superfamily. FabH family. In terms of assembly, homodimer.

It localises to the cytoplasm. The enzyme catalyses butanoyl-CoA + malonyl-[ACP] + H(+) = 3-oxohexanoyl-[ACP] + CO2 + CoA. It carries out the reaction hexanoyl-CoA + malonyl-[ACP] + H(+) = 3-oxooctanoyl-[ACP] + CO2 + CoA. The catalysed reaction is octanoyl-CoA + malonyl-[ACP] + H(+) = 3-oxodecanoyl-[ACP] + CO2 + CoA. It catalyses the reaction decanoyl-CoA + malonyl-[ACP] + H(+) = 3-oxododecanoyl-[ACP] + CO2 + CoA. The enzyme catalyses 2-methylpropanoyl-CoA + malonyl-[ACP] + H(+) = 4-methyl-3-oxopentanoyl-[ACP] + CO2 + CoA. It carries out the reaction 3-methylbutanoyl-CoA + malonyl-[ACP] + H(+) = 5-methyl-3-oxohexanoyl-[ACP] + CO2 + CoA. The catalysed reaction is malonyl-[ACP] + acetyl-CoA + H(+) = 3-oxobutanoyl-[ACP] + CO2 + CoA. Its pathway is lipid metabolism; fatty acid biosynthesis. Functionally, catalyzes the condensation reaction of fatty acid synthesis by the addition to an acyl acceptor of two carbons from malonyl-ACP. Catalyzes the first condensation reaction which initiates fatty acid synthesis and may therefore play a role in governing the total rate of fatty acid production. Possesses both acetoacetyl-ACP synthase and acetyl transacylase activities. Can use a wide range of acyl-CoAs as the primer substrate in vitro, with a slight preference for short, medium-straight chain acyl-CoAs. Can also use branched-chain acyl-CoAs and acetyl-CoA. The protein is Beta-ketoacyl-[acyl-carrier-protein] synthase III of Xanthomonas campestris pv. campestris (strain 8004).